Reading from the N-terminus, the 159-residue chain is ATP synthase subunit b (159 aa).

A helical membrane pass occupies residues 4–24 (VGINGTLIVQLVTFVILVALL).

The protein belongs to the ATPase B chain family. In terms of assembly, F-type ATPases have 2 components, F(1) - the catalytic core - and F(0) - the membrane proton channel. F(1) has five subunits: alpha(3), beta(3), gamma(1), delta(1), epsilon(1). F(0) has three main subunits: a(1), b(2) and c(10-14). The alpha and beta chains form an alternating ring which encloses part of the gamma chain. F(1) is attached to F(0) by a central stalk formed by the gamma and epsilon chains, while a peripheral stalk is formed by the delta and b chains.

It localises to the cell inner membrane. F(1)F(0) ATP synthase produces ATP from ADP in the presence of a proton or sodium gradient. F-type ATPases consist of two structural domains, F(1) containing the extramembraneous catalytic core and F(0) containing the membrane proton channel, linked together by a central stalk and a peripheral stalk. During catalysis, ATP synthesis in the catalytic domain of F(1) is coupled via a rotary mechanism of the central stalk subunits to proton translocation. In terms of biological role, component of the F(0) channel, it forms part of the peripheral stalk, linking F(1) to F(0). The polypeptide is ATP synthase subunit b (Acidithiobacillus ferridurans).